Here is a 520-residue protein sequence, read N- to C-terminus: Nonsense-mediated mRNA decay factor SMG9 (520 aa).

A disordered region spans residues 1–143 (MSESGHSQPG…KGEKEGQRPT (143 aa)). The residue at position 2 (Ser2) is an N-acetylserine. Phosphoserine is present on residues Ser2, Ser4, Ser7, Ser32, and Ser53. A compositionally biased stretch (basic and acidic residues) spans 36–53 (GRERDYIAPWERERRDGS). A compositionally biased stretch (pro residues) spans 78–94 (QPPPPAAPAAPPAPAPL). Residues 109–121 (GPAATTSTSTPEG) are compositionally biased toward low complexity. Residues 122–133 (TAPPPPAAPVPP) are compositionally biased toward pro residues. A Phosphoserine modification is found at Ser451.

Belongs to the SMG9 family. Self-associates to form homodimers and forms heterodimers with SMG8; these assembly forms may represent SMG1C intermediate forms. Component of the SMG1C complex composed of SMG1, SMG8 and SMG9. Self-associates to form homodimers and forms heterodimers with SMG8; these assembly forms may represent SMG1C intermediate forms. Interacts with DHX34; the interaction is RNA-independent. In terms of processing, phosphorylated by SMG1.

Its function is as follows. Involved in nonsense-mediated decay (NMD) of mRNAs containing premature stop codons. Is recruited by release factors to stalled ribosomes together with SMG1 and SMG8 (forming the SMG1C protein kinase complex) and, in the SMG1C complex, is required for the efficient association between SMG1 and SMG8. Plays a role in brain, heart, and eye development. This is Nonsense-mediated mRNA decay factor SMG9 from Bos taurus (Bovine).